A 90-amino-acid chain; its full sequence is UPF0297 protein LVIS_1222 (90 aa).

It belongs to the UPF0297 family.

The protein is UPF0297 protein LVIS_1222 of Levilactobacillus brevis (strain ATCC 367 / BCRC 12310 / CIP 105137 / JCM 1170 / LMG 11437 / NCIMB 947 / NCTC 947) (Lactobacillus brevis).